A 236-amino-acid chain; its full sequence is Demethylmenaquinone methyltransferase (236 aa).

Residues threonine 58, aspartate 79, and 106-107 (NA) each bind S-adenosyl-L-methionine.

The protein belongs to the class I-like SAM-binding methyltransferase superfamily. MenG/UbiE family.

The enzyme catalyses a 2-demethylmenaquinol + S-adenosyl-L-methionine = a menaquinol + S-adenosyl-L-homocysteine + H(+). The protein operates within quinol/quinone metabolism; menaquinone biosynthesis; menaquinol from 1,4-dihydroxy-2-naphthoate: step 2/2. Methyltransferase required for the conversion of demethylmenaquinol (DMKH2) to menaquinol (MKH2). This Alkalihalophilus pseudofirmus (strain ATCC BAA-2126 / JCM 17055 / OF4) (Bacillus pseudofirmus) protein is Demethylmenaquinone methyltransferase.